Here is a 377-residue protein sequence, read N- to C-terminus: MSNGIVIIGSGFAARQLVKNIRKQDATIPLTLIAADSMDEYNKPDLSHVISQGQRADDLTRQTAGEFAEQFNLHLFPQTWVTDIDAEARVVKSQNNQWQYDKLVLATGASAFVPPVPGRELMLTLNSQQEYRACETQLRDARRVLIVGGGLIGSELAMDFCRAGKAVTLIDNAASILASLMPPEVSSRLQHRLTEMGVHLLLKSQLQGLEKTDSGILATLDHQRSIEVDAVIAATGLRPETALARRAGLTINRGVCVDSYLQTSNDDIYALGDYAEINGQVLPFLQPIQLSAMVLAKNLLGNNTPLKLPTMLVKIKTPELPLHLAGETQRQDLRWQINTERQGMVARGVDDADQLRAFVVSEDRMKEAFGLLKTLPM.

It belongs to the FAD-dependent oxidoreductase family. It depends on FAD as a cofactor.

It is found in the cytoplasm. It carries out the reaction 2 reduced [nitric oxide reductase rubredoxin domain] + NAD(+) + H(+) = 2 oxidized [nitric oxide reductase rubredoxin domain] + NADH. Its pathway is nitrogen metabolism; nitric oxide reduction. Its function is as follows. One of at least two accessory proteins for anaerobic nitric oxide (NO) reductase. Reduces the rubredoxin moiety of NO reductase. This Shigella boydii serotype 18 (strain CDC 3083-94 / BS512) protein is Nitric oxide reductase FlRd-NAD(+) reductase.